A 107-amino-acid chain; its full sequence is Protein TAP1 (107 aa).

The N-terminal stretch at 1–23 (MESKRVDVLVGLMLIMAIFGVHS) is a signal peptide.

Stamen.

This Antirrhinum majus (Garden snapdragon) protein is Protein TAP1 (TAP1).